The chain runs to 179 residues: Large ribosomal subunit protein uL5 (179 aa).

It belongs to the universal ribosomal protein uL5 family. Part of the 50S ribosomal subunit; part of the 5S rRNA/L5/L18/L25 subcomplex. Contacts the 5S rRNA and the P site tRNA. Forms a bridge to the 30S subunit in the 70S ribosome.

This is one of the proteins that bind and probably mediate the attachment of the 5S RNA into the large ribosomal subunit, where it forms part of the central protuberance. In the 70S ribosome it contacts protein S13 of the 30S subunit (bridge B1b), connecting the 2 subunits; this bridge is implicated in subunit movement. Contacts the P site tRNA; the 5S rRNA and some of its associated proteins might help stabilize positioning of ribosome-bound tRNAs. This Neisseria meningitidis serogroup C (strain 053442) protein is Large ribosomal subunit protein uL5.